A 168-amino-acid polypeptide reads, in one-letter code: Transcriptional regulator MraZ (168 aa).

2 consecutive SpoVT-AbrB domains span residues 8-51 (EYNQ…GGDR) and 90-140 (ALNM…KADT).

This sequence belongs to the MraZ family. In terms of assembly, forms oligomers.

It localises to the cytoplasm. Its subcellular location is the nucleoid. The sequence is that of Transcriptional regulator MraZ from Cereibacter sphaeroides (strain ATCC 17025 / ATH 2.4.3) (Rhodobacter sphaeroides).